The sequence spans 533 residues: WUSCHEL-related homeobox 7 (533 aa).

Disordered regions lie at residues 1–74 and 125–212; these read MASS…NPRP and SKNK…STQA. Low complexity predominate over residues 28–41; that stretch reads AGSPPSLLSGSSAG. Over residues 59-68 the composition is skewed to basic and acidic residues; it reads GEERVPDPKP. A DNA-binding region (homeobox; WUS-type) is located at residues 65 to 129; sequence DPKPRWNPRP…NRKSRSKNKL (65 aa). Residues 132 to 143 show a composition bias toward gly residues; it reads GGTGRAGLGLGG. A compositionally biased stretch (pro residues) spans 161–174; sequence FTPPPPILPAPQPV. Low complexity predominate over residues 175 to 202; it reads QPQQQLVSPVAAPTSSSSSSSDRSSGSS.

The protein belongs to the WUS homeobox family.

The protein resides in the nucleus. Transcription factor which may be involved in developmental processes. The sequence is that of WUSCHEL-related homeobox 7 (WOX7) from Oryza sativa subsp. japonica (Rice).